The following is a 587-amino-acid chain: Mitogen-activated protein kinase 4 (587 aa).

A Protein kinase domain is found at 20–312 (FVDFQPLGFG…AEMGLQHPYM (293 aa)). Residues 26–34 (LGFGVNGLV) and K49 each bind ATP. D149 serves as the catalytic Proton acceptor. S186 carries the phosphoserine; by PAK1, PAK2 and PAK3 modification. The SEG motif motif lies at 186-188 (SEG). The short motif at 328 to 333 (FRIEDE) is the FRIEDE motif element. Composition is skewed to basic and acidic residues over residues 373–383 (QDASEVQRDPR) and 395–413 (VDPRKDSHSSSERFLEQSH). The tract at residues 373 to 413 (QDASEVQRDPRAGSAPLAEDVQVDPRKDSHSSSERFLEQSH) is disordered. S434 is subject to Phosphoserine. The disordered stretch occupies residues 499–534 (STQGGPEHASPPADDPERRLSASPPGRPAPVDGGAS).

It belongs to the protein kinase superfamily. CMGC Ser/Thr protein kinase family. MAP kinase subfamily. As to quaternary structure, homodimer. Heterodimer with ERK3/MAPK6. Interacts with (via FRIEDE motif) MAPKAPK5. Mg(2+) serves as cofactor. In terms of processing, phosphorylated at Ser-186 by PAK1, PAK2 and PAK3 resulting in catalytic activation. Phosphorylated by MAPKAPK5 at other sites. High expression in heart and brain.

The protein localises to the cytoplasm. The protein resides in the nucleus. The enzyme catalyses L-seryl-[protein] + ATP = O-phospho-L-seryl-[protein] + ADP + H(+). It catalyses the reaction L-threonyl-[protein] + ATP = O-phospho-L-threonyl-[protein] + ADP + H(+). Its activity is regulated as follows. Activated by phosphorylation at Ser-186. Functionally, atypical MAPK protein. Phosphorylates microtubule-associated protein 2 (MAP2) and MAPKAPK5. The precise role of the complex formed with MAPKAPK5 is still unclear, but the complex follows a complex set of phosphorylation events: upon interaction with atypical MAPKAPK5, ERK4/MAPK4 is phosphorylated at Ser-186 and then mediates phosphorylation and activation of MAPKAPK5, which in turn phosphorylates ERK4/MAPK4. May promote entry in the cell cycle. The chain is Mitogen-activated protein kinase 4 (MAPK4) from Homo sapiens (Human).